Consider the following 565-residue polypeptide: Sulfite reductase [NADPH] hemoprotein beta-component (565 aa).

Residues Cys-429, Cys-435, Cys-474, and Cys-478 each contribute to the [4Fe-4S] cluster site. Cys-478 serves as a coordination point for siroheme.

It belongs to the nitrite and sulfite reductase 4Fe-4S domain family. In terms of assembly, alpha(8)-beta(8). The alpha component is a flavoprotein, the beta component is a hemoprotein. The cofactor is siroheme. Requires [4Fe-4S] cluster as cofactor.

The catalysed reaction is hydrogen sulfide + 3 NADP(+) + 3 H2O = sulfite + 3 NADPH + 4 H(+). It participates in sulfur metabolism; hydrogen sulfide biosynthesis; hydrogen sulfide from sulfite (NADPH route): step 1/1. In terms of biological role, component of the sulfite reductase complex that catalyzes the 6-electron reduction of sulfite to sulfide. This is one of several activities required for the biosynthesis of L-cysteine from sulfate. The protein is Sulfite reductase [NADPH] hemoprotein beta-component of Shewanella sp. (strain MR-4).